The primary structure comprises 428 residues: L-rhamnonate dehydratase (428 aa).

Substrate contacts are provided by His56 and Arg82. Mg(2+) is bound by residues Asp249, Glu275, and Glu303. His352 acts as the Proton acceptor in catalysis. Residue Glu372 coordinates substrate.

This sequence belongs to the mandelate racemase/muconate lactonizing enzyme family. RhamD subfamily. In terms of assembly, homooctamer; tetramer of dimers. Mg(2+) is required as a cofactor.

It carries out the reaction L-rhamnonate = 2-dehydro-3-deoxy-L-rhamnonate + H2O. In terms of biological role, catalyzes the dehydration of L-rhamnonate to 2-keto-3-deoxy-L-rhamnonate (KDR). This chain is L-rhamnonate dehydratase, found in Shigella sonnei (strain Ss046).